Here is a 493-residue protein sequence, read N- to C-terminus: EGF-containing fibulin-like extracellular matrix protein 1 (493 aa).

The first 17 residues, 1 to 17, serve as a signal peptide directing secretion; the sequence is MLKALFLTMLTLALVKS. The region spanning 26-71 is the EGF-like 1; atypical domain; sequence YTQCTDGYEWDPVRQQCKDIDECDIVPDACKGGMKCVNHYGGYLCL. In terms of domain architecture, EGF-like 2; calcium-binding spans 173 to 213; sequence DIDECTAGTHNCRADQVCINLRGSFACQCPPGYQKRGEQCV. 15 disulfide bridges follow: cysteine 177–cysteine 190, cysteine 184–cysteine 199, cysteine 201–cysteine 212, cysteine 218–cysteine 228, cysteine 224–cysteine 237, cysteine 239–cysteine 252, cysteine 258–cysteine 268, cysteine 264–cysteine 277, cysteine 279–cysteine 292, cysteine 298–cysteine 309, cysteine 305–cysteine 318, cysteine 320–cysteine 332, cysteine 338–cysteine 350, cysteine 344–cysteine 359, and cysteine 365–cysteine 377. Residues 214 to 253 enclose the EGF-like 3; calcium-binding domain; that stretch reads DIDECTIPPYCHQRCVNTPGSFYCQCSPGFQLAANNYTCV. A glycan (N-linked (GlcNAc...) asparagine) is linked at asparagine 249. Residues 254 to 293 enclose the EGF-like 4; calcium-binding domain; it reads DINECDASNQCAQQCYNILGSFICQCNQGYELSSDRLNCE. The segment at 259 to 493 is mediates interaction with TIMP3; it reads DASNQCAQQC…LTIIVGPFSF (235 aa). The region spanning 294 to 333 is the EGF-like 5; calcium-binding domain; that stretch reads DIDECRTSSYLCQYQCVNEPGKFSCMCPQGYQVVRSRTCQ. The 45-residue stretch at 334 to 378 folds into the EGF-like 6; calcium-binding domain; it reads DINECETTNECREDEMCWNYHGGFRCYPRNPCQDPYILTPENRCV.

Belongs to the fibulin family. Interacts with ECM1. Interacts with TIMP3. As to expression, in the eye, associated with photoreceptor outer and inner segment regions, the nerve fiber layer, outer nuclear layer and inner and outer plexiform layers of the retina.

It localises to the secreted. The protein localises to the extracellular space. Its subcellular location is the extracellular matrix. Functionally, binds EGFR, the EGF receptor, inducing EGFR autophosphorylation and the activation of downstream signaling pathways. May play a role in cell adhesion and migration. May function as a negative regulator of chondrocyte differentiation. In the olfactory epithelium, it may regulate glial cell migration, differentiation and the ability of glial cells to support neuronal neurite outgrowth. This chain is EGF-containing fibulin-like extracellular matrix protein 1 (EFEMP1), found in Homo sapiens (Human).